The following is a 530-amino-acid chain: Glutamate--cysteine ligase (530 aa).

Belongs to the glutamate--cysteine ligase type 1 family. Type 1 subfamily.

It catalyses the reaction L-cysteine + L-glutamate + ATP = gamma-L-glutamyl-L-cysteine + ADP + phosphate + H(+). Its pathway is sulfur metabolism; glutathione biosynthesis; glutathione from L-cysteine and L-glutamate: step 1/2. In Pseudomonas entomophila (strain L48), this protein is Glutamate--cysteine ligase.